Reading from the N-terminus, the 338-residue chain is Methionine import ATP-binding protein MetN 2 (338 aa).

An ABC transporter domain is found at 2 to 242 (IEIEKVCVDF…PQHAFTQQLV (241 aa)). 39–46 (GTSGAGKS) contributes to the ATP binding site.

This sequence belongs to the ABC transporter superfamily. Methionine importer (TC 3.A.1.24) family. In terms of assembly, the complex is composed of two ATP-binding proteins (MetN), two transmembrane proteins (MetI) and a solute-binding protein (MetQ).

It localises to the cell inner membrane. It catalyses the reaction L-methionine(out) + ATP + H2O = L-methionine(in) + ADP + phosphate + H(+). It carries out the reaction D-methionine(out) + ATP + H2O = D-methionine(in) + ADP + phosphate + H(+). Its function is as follows. Part of the ABC transporter complex MetNIQ involved in methionine import. Responsible for energy coupling to the transport system. The polypeptide is Methionine import ATP-binding protein MetN 2 (Salmonella typhi).